The sequence spans 300 residues: uncharacterized protein (300 aa).

Transmembrane regions (helical) follow at residues 4–24 (IIII…WIAM), 31–51 (IPPF…LIIL), 68–88 (FQIF…LYGG), 95–115 (ISSI…HFYL), 120–140 (NFIQ…VLLI), 146–166 (CFFQ…HAVI), 177–197 (VSVI…LSII), 214–234 (ILAV…SYFY), 242–262 (FYAS…EIYI), and 272–292 (LWFI…INFF). 2 consecutive EamA domains span residues 15–139 (ITWG…FVLL) and 161–287 (LSHA…LTLI).

Belongs to the EamA transporter family.

Its subcellular location is the cell membrane. This is an uncharacterized protein from Buchnera aphidicola subsp. Schizaphis graminum (strain Sg).